Here is a 183-residue protein sequence, read N- to C-terminus: Endoribonuclease YbeY (183 aa).

Zn(2+) is bound by residues His140, His144, and His150.

This sequence belongs to the endoribonuclease YbeY family. Requires Zn(2+) as cofactor.

Its subcellular location is the cytoplasm. In terms of biological role, single strand-specific metallo-endoribonuclease involved in late-stage 70S ribosome quality control and in maturation of the 3' terminus of the 16S rRNA. This chain is Endoribonuclease YbeY, found in Bradyrhizobium diazoefficiens (strain JCM 10833 / BCRC 13528 / IAM 13628 / NBRC 14792 / USDA 110).